A 256-amino-acid chain; its full sequence is Phosphonates import ATP-binding protein PhnC (256 aa).

Residues 7–251 enclose the ABC transporter domain; sequence IEMKNVTKVY…VFDNIYNGGK (245 aa). Residue 40 to 47 coordinates ATP; it reads GLSGAGKS.

It belongs to the ABC transporter superfamily. Phosphonates importer (TC 3.A.1.9.1) family. The complex is composed of two ATP-binding proteins (PhnC), two transmembrane proteins (PhnE) and a solute-binding protein (PhnD).

The protein localises to the cell membrane. The enzyme catalyses phosphonate(out) + ATP + H2O = phosphonate(in) + ADP + phosphate + H(+). Functionally, part of the ABC transporter complex PhnCDE involved in phosphonates import. Responsible for energy coupling to the transport system. This is Phosphonates import ATP-binding protein PhnC from Lactobacillus delbrueckii subsp. bulgaricus (strain ATCC 11842 / DSM 20081 / BCRC 10696 / JCM 1002 / NBRC 13953 / NCIMB 11778 / NCTC 12712 / WDCM 00102 / Lb 14).